A 160-amino-acid chain; its full sequence is Large ribosomal subunit protein uL18 (160 aa).

This sequence belongs to the universal ribosomal protein uL18 family. Part of the 50S ribosomal subunit. Contacts the 5S and 23S rRNAs.

Its function is as follows. This is one of the proteins that bind and probably mediate the attachment of the 5S RNA into the large ribosomal subunit, where it forms part of the central protuberance. The chain is Large ribosomal subunit protein uL18 from Thermoplasma volcanium (strain ATCC 51530 / DSM 4299 / JCM 9571 / NBRC 15438 / GSS1).